A 364-amino-acid chain; its full sequence is GDSL esterase/lipase 7 (364 aa).

Residues 1 to 19 (MKSLLICLVLLELVWLGNG) form the signal peptide. The active-site Nucleophile is Ser-37. Residues Asn-236, Asn-237, and Asn-264 are each glycosylated (N-linked (GlcNAc...) asparagine). Active-site residues include Asp-329 and His-332. Asn-351 is a glycosylation site (N-linked (GlcNAc...) asparagine).

It belongs to the 'GDSL' lipolytic enzyme family.

Its subcellular location is the secreted. This is GDSL esterase/lipase 7 (GLIP7) from Arabidopsis thaliana (Mouse-ear cress).